The following is a 214-amino-acid chain: Histone H1.1 (214 aa).

The tract at residues 1 to 43 (MSETAPVPQPASVAPEKPAATKKTRKPAKAAVPRKKPAGPSVS) is disordered. Residue Ser2 is modified to N-acetylserine. Phosphoserine is present on residues Ser2 and Ser12. Lys17 bears the N6-acetyllysine mark. The span at 20–37 (ATKKTRKPAKAAVPRKKP) shows a compositional bias: basic residues. N6-(beta-hydroxybutyryl)lysine is present on Lys36. One can recognise an H15 domain in the interval 38-111 (AGPSVSELIV…GAAGSFKLNK (74 aa)). Position 43 is a phosphoserine (Ser43). At Lys54 the chain carries N6-(beta-hydroxybutyryl)lysine. The residue at position 56 (Arg56) is a Citrulline. An N6-(beta-hydroxybutyryl)lysine modification is found at Lys66. Residue Ser67 is modified to Phosphoserine. Lys77 is modified (N6-acetyllysine). N6-(beta-hydroxybutyryl)lysine is present on Lys87. N6-(beta-hydroxybutyryl)lysine; alternate is present on Lys92. An N6-acetyllysine; alternate modification is found at Lys92. Residues 93–214 (GTLVQTKGTG…KPKKAAPKKK (122 aa)) are disordered. Position 106 is a phosphoserine (Ser106). Lys108 bears the N6-(beta-hydroxybutyryl)lysine mark. Positions 116–144 (KASTTKVTVKAKASGAAKKPKKTAGAAAK) are enriched in low complexity. Lys121 is subject to N6-acetyllysine. Composition is skewed to basic residues over residues 145–179 (KTVKTPKKPKKPAVSKKTSSKSPKKPKVVKAKKVA) and 186–214 (KAVKPKAAKVKVTKPKTPAKPKKAAPKKK). A Phosphothreonine modification is found at Thr202.

Belongs to the histone H1/H5 family. In terms of assembly, interacts with DFFB. H1 histones are progressively phosphorylated during the cell cycle, becoming maximally phosphorylated during late G2 phase and M phase, and being dephosphorylated sharply thereafter. Post-translationally, citrullination at Arg-56 (H1R54ci) by PADI4 takes place within the DNA-binding site of H1 and results in its displacement from chromatin and global chromatin decondensation, thereby promoting pluripotency and stem cell maintenance.

The protein localises to the nucleus. Its subcellular location is the chromosome. Functionally, H1 histones bind to linker DNA between nucleosomes forming the macromolecular structure known as the chromatin fiber. H1 histones are necessary for the condensation of nucleosome chains into higher-order structured fibers. Also acts as a regulator of individual gene transcription through chromatin remodeling. The protein is Histone H1.1 of Rattus norvegicus (Rat).